We begin with the raw amino-acid sequence, 686 residues long: Translation initiation factor IF-2 (686 aa).

The segment at 54 to 105 is disordered; sequence KPSVADEFEVEEKVVRSKKNSNKKKKKGKGNEDKRQENFAGRQQTQTVETPD. Residues 69–81 show a composition bias toward basic residues; the sequence is RSKKNSNKKKKKG. The 170-residue stretch at 188–357 folds into the tr-type G domain; sequence ERPAVVTIMG…LLVSEVEEYK (170 aa). The interval 197 to 204 is G1; sequence GHVDHGKT. Residue 197-204 coordinates GTP; it reads GHVDHGKT. The G2 stretch occupies residues 222 to 226; the sequence is GITQH. The segment at 243 to 246 is G3; sequence DTPG. Residues 243 to 247 and 297 to 300 each bind GTP; these read DTPGH and NKMD. Positions 297–300 are G4; that stretch reads NKMD. The tract at residues 333–335 is G5; sequence SAI.

The protein belongs to the TRAFAC class translation factor GTPase superfamily. Classic translation factor GTPase family. IF-2 subfamily.

It localises to the cytoplasm. Functionally, one of the essential components for the initiation of protein synthesis. Protects formylmethionyl-tRNA from spontaneous hydrolysis and promotes its binding to the 30S ribosomal subunits. Also involved in the hydrolysis of GTP during the formation of the 70S ribosomal complex. This chain is Translation initiation factor IF-2, found in Bacillus cereus (strain 03BB102).